Here is a 247-residue protein sequence, read N- to C-terminus: Orotidine 5'-phosphate decarboxylase (247 aa).

Substrate is bound by residues D21, K43, 70-79, T129, R190, Q199, G219, and R220; that span reads DMKFHDIPNT. K72 functions as the Proton donor in the catalytic mechanism.

Belongs to the OMP decarboxylase family. Type 1 subfamily. In terms of assembly, homodimer.

The catalysed reaction is orotidine 5'-phosphate + H(+) = UMP + CO2. It participates in pyrimidine metabolism; UMP biosynthesis via de novo pathway; UMP from orotate: step 2/2. Its function is as follows. Catalyzes the decarboxylation of orotidine 5'-monophosphate (OMP) to uridine 5'-monophosphate (UMP). This chain is Orotidine 5'-phosphate decarboxylase, found in Chromobacterium violaceum (strain ATCC 12472 / DSM 30191 / JCM 1249 / CCUG 213 / NBRC 12614 / NCIMB 9131 / NCTC 9757 / MK).